The sequence spans 450 residues: Tubulin alpha-1 chain (450 aa).

7 residues coordinate GTP: glutamine 11, glutamate 71, glycine 144, threonine 145, threonine 179, asparagine 206, and asparagine 228. Residue glutamate 71 participates in Mg(2+) binding. Glutamate 254 is an active-site residue. Position 349 is a phosphothreonine (threonine 349). Residues 431 to 450 (DYEEVGGEGAEDDDEEGDEY) form a disordered region.

Belongs to the tubulin family. As to quaternary structure, dimer of alpha and beta chains. A typical microtubule is a hollow water-filled tube with an outer diameter of 25 nm and an inner diameter of 15 nM. Alpha-beta heterodimers associate head-to-tail to form protofilaments running lengthwise along the microtubule wall with the beta-tubulin subunit facing the microtubule plus end conferring a structural polarity. Microtubules usually have 13 protofilaments but different protofilament numbers can be found in some organisms and specialized cells. Mg(2+) is required as a cofactor. In terms of processing, undergoes a tyrosination/detyrosination cycle, the cyclic removal and re-addition of a C-terminal tyrosine residue by the enzymes tubulin tyrosine carboxypeptidase (TTCP) and tubulin tyrosine ligase (TTL), respectively.

The protein resides in the cytoplasm. The protein localises to the cytoskeleton. It catalyses the reaction GTP + H2O = GDP + phosphate + H(+). In terms of biological role, tubulin is the major constituent of microtubules, a cylinder consisting of laterally associated linear protofilaments composed of alpha- and beta-tubulin heterodimers. Microtubules grow by the addition of GTP-tubulin dimers to the microtubule end, where a stabilizing cap forms. Below the cap, tubulin dimers are in GDP-bound state, owing to GTPase activity of alpha-tubulin. This Arabidopsis thaliana (Mouse-ear cress) protein is Tubulin alpha-1 chain (TUBA1).